Consider the following 591-residue polypeptide: MESIMEEADSYIEYVSVAERRAIAAQKILQRKGKASELEEEADKEKLAEAKPSLLVQATQLKRDVPEVSATEQIILQEKEMMEHLSDKKTLMSVRELAKGITYTEPLLTGWKPPLHIRKMSSKQRDLIRKQWHIIVNGDDIPPPIKNFKDMKFPRPVLDTLKEKGIVQPTPIQVQGLPVILAGRDMIGIAFTGSGKTLVFVLPMIMIALQEEMMMPIAAGEGPIGLIVCPSRELARQTYEVVEQFVAPLVEAGYPPLRSLLCIGGIDMRSQLEVVKRGVHIVVATPGRLKDMLAKKKMSLDACRYLTLDEADRLVDLGFEDDIREVFDHFKSQRQTLLFSATMPTKIQIFARSALVKPVTVNVGRAGAANLDVIQEVEYVKQEAKIVYLLECLQKTSPPVLIFCENKADVDDIHEYLLLKGVEAVAIHGGKDQEDREYAISSFKAGKKDVLVATDVASKGLDFPDIQHVINYDMPAEIENYVHRIGRTGRCGKTGIATTFINKNQSETTLLDLKHLLQEAKQRIPPVLAELNDPMEEAETIANASGVKGCAYCGGLGHRIRDCPKLEHQKSVAISNSRKDYFGSGGYRGEI.

The short motif at 146–174 (KNFKDMKFPRPVLDTLKEKGIVQPTPIQV) is the Q motif element. One can recognise a Helicase ATP-binding domain in the interval 177–361 (LPVILAGRDM…RSALVKPVTV (185 aa)). 190–197 (AFTGSGKT) is an ATP binding site. The DEAD box signature appears at 309 to 312 (DEAD). One can recognise a Helicase C-terminal domain in the interval 372 to 532 (DVIQEVEYVK…RIPPVLAELN (161 aa)). The CCHC-type zinc-finger motif lies at 548-565 (KGCAYCGGLGHRIRDCPK).

Belongs to the DEAD box helicase family. DDX41 subfamily.

It carries out the reaction ATP + H2O = ADP + phosphate + H(+). This is DEAD-box ATP-dependent RNA helicase 35 (RH35) from Arabidopsis thaliana (Mouse-ear cress).